A 548-amino-acid chain; its full sequence is 1,3-beta-glucanosyltransferase gel4 (548 aa).

Residues 1–25 (MKFVYAAAGASLVGSALATLPVIEA) form the signal peptide. 2 N-linked (GlcNAc...) asparagine glycosylation sites follow: Asn-51 and Asn-69. Cys-88 and Cys-117 form a disulfide bridge. (1,3-beta-D-glucosyl)n contacts are provided by residues Tyr-106, 133–141 (SAPSESINR), Asn-174, and Glu-175. Glu-175 (proton donor) is an active-site residue. An N-linked (GlcNAc...) asparagine glycan is attached at Asn-181. Residues Asp-217 and Arg-222 each contribute to the (1,3-beta-D-glucosyl)n site. 5 cysteine pairs are disulfide-bonded: Cys-231-Cys-364, Cys-249-Cys-280, Cys-386-Cys-437, Cys-395-Cys-461, and Cys-414-Cys-419. Glu-277 serves as the catalytic Nucleophile. Position 309 (Tyr-309) interacts with (1,3-beta-D-glucosyl)n. An N-linked (GlcNAc...) asparagine glycan is attached at Asn-425. A lipid anchor (GPI-like-anchor amidated alanine) is attached at Ala-519. The propeptide at 520 to 548 (SPMAVKVGNWQFGAYIATALFAGVGMLVL) is removed in mature form.

This sequence belongs to the glycosyl hydrolase 72 family. The GPI-like anchor contains a phosphoceramide lipid group.

Its subcellular location is the cell membrane. Splits internally a 1,3-beta-glucan molecule and transfers the newly generated reducing end (the donor) to the non-reducing end of another 1,3-beta-glucan molecule (the acceptor) forming a 1,3-beta linkage, resulting in the elongation of 1,3-beta-glucan chains in the cell wall. Involved in cell wall morphogenesis. This is 1,3-beta-glucanosyltransferase gel4 (gel4) from Aspergillus fumigatus (strain ATCC MYA-4609 / CBS 101355 / FGSC A1100 / Af293) (Neosartorya fumigata).